The sequence spans 194 residues: MEAWYMDDSADDQRKPHHRSPPEYVSLEKLAELGVLHWVLDADSFETDPELQRIRKERGYNYEDFIEVSPERLANYETKIKNFYEEHMHTDEEIRYCLDGSGYFDIRDPEDRWIRIWVKKGDMIVLPAGSYHRFTLDENNYLKAMRLFVGEPVWTPYNRPQDEHPVRKDYINNFLKTHLDKIDVSLSTQHAATA.

Residues 1 to 21 form a disordered region; the sequence is MEAWYMDDSADDQRKPHHRSP. The Fe(2+) site is built by histidine 87, histidine 89, glutamate 93, and histidine 132. Histidine 87, histidine 89, glutamate 93, and histidine 132 together coordinate Ni(2+).

It belongs to the acireductone dioxygenase (ARD) family. Fe(2+) serves as cofactor. Requires Ni(2+) as cofactor.

Its subcellular location is the cytoplasm. The protein resides in the nucleus. The enzyme catalyses 1,2-dihydroxy-5-(methylsulfanyl)pent-1-en-3-one + O2 = 4-methylsulfanyl-2-oxobutanoate + formate + 2 H(+). It catalyses the reaction 1,2-dihydroxy-5-(methylsulfanyl)pent-1-en-3-one + O2 = 3-(methylsulfanyl)propanoate + CO + formate + 2 H(+). The protein operates within amino-acid biosynthesis; L-methionine biosynthesis via salvage pathway; L-methionine from S-methyl-5-thio-alpha-D-ribose 1-phosphate: step 5/6. Catalyzes 2 different reactions between oxygen and the acireductone 1,2-dihydroxy-3-keto-5-methylthiopentene (DHK-MTPene) depending upon the metal bound in the active site. Fe-containing acireductone dioxygenase (Fe-ARD) produces formate and 2-keto-4-methylthiobutyrate (KMTB), the alpha-ketoacid precursor of methionine in the methionine recycle pathway. Ni-containing acireductone dioxygenase (Ni-ARD) produces methylthiopropionate, carbon monoxide and formate, and does not lie on the methionine recycle pathway. The sequence is that of Acireductone dioxygenase 1 from Physcomitrium patens (Spreading-leaved earth moss).